The primary structure comprises 153 residues: Endoribonuclease YbeY (153 aa).

His118, His122, and His128 together coordinate Zn(2+).

The protein belongs to the endoribonuclease YbeY family. Zn(2+) is required as a cofactor.

Its subcellular location is the cytoplasm. Functionally, single strand-specific metallo-endoribonuclease involved in late-stage 70S ribosome quality control and in maturation of the 3' terminus of the 16S rRNA. This Oenococcus oeni (strain ATCC BAA-331 / PSU-1) protein is Endoribonuclease YbeY.